The sequence spans 38 residues: Large ribosomal subunit protein bL36 (38 aa).

This sequence belongs to the bacterial ribosomal protein bL36 family.

This is Large ribosomal subunit protein bL36 from Lacticaseibacillus casei (strain BL23) (Lactobacillus casei).